A 72-amino-acid polypeptide reads, in one-letter code: Large ribosomal subunit protein bL28 (72 aa).

This sequence belongs to the bacterial ribosomal protein bL28 family.

This Pelodictyon phaeoclathratiforme (strain DSM 5477 / BU-1) protein is Large ribosomal subunit protein bL28.